A 156-amino-acid chain; its full sequence is Small ribosomal subunit protein uS7 (156 aa).

Belongs to the universal ribosomal protein uS7 family. Part of the 30S ribosomal subunit. Contacts proteins S9 and S11.

Its function is as follows. One of the primary rRNA binding proteins, it binds directly to 16S rRNA where it nucleates assembly of the head domain of the 30S subunit. Is located at the subunit interface close to the decoding center, probably blocks exit of the E-site tRNA. The protein is Small ribosomal subunit protein uS7 of Thermosynechococcus vestitus (strain NIES-2133 / IAM M-273 / BP-1).